The chain runs to 210 residues: Large ribosomal subunit protein uL3 (210 aa).

This sequence belongs to the universal ribosomal protein uL3 family. Part of the 50S ribosomal subunit. Forms a cluster with proteins L14 and L19.

One of the primary rRNA binding proteins, it binds directly near the 3'-end of the 23S rRNA, where it nucleates assembly of the 50S subunit. The chain is Large ribosomal subunit protein uL3 from Pseudothermotoga lettingae (strain ATCC BAA-301 / DSM 14385 / NBRC 107922 / TMO) (Thermotoga lettingae).